Reading from the N-terminus, the 87-residue chain is Large ribosomal subunit protein bL27 (87 aa).

Positions 1 to 20 are disordered; the sequence is MARKRGGSGSKNGRDSNPKY.

The protein belongs to the bacterial ribosomal protein bL27 family.

The chain is Large ribosomal subunit protein bL27 (rpmA) from Treponema pallidum (strain Nichols).